We begin with the raw amino-acid sequence, 635 residues long: MADSRSLLDTINSPRDLKKLSIRQLETLANECRHELINLISLNGGHFASSLGVTELSVALHHVYNTEKDRIVWDVGHQAYIHKMLTGRRERMNSNRKYGGISGFPKIHESPHDAFGTGHASTSISAAAGIASARDLKGGNEKVIAVIGDGSMTGGMAFEAMNHLGDLKNDVLVILNDNQMAISPSTGGLKTHMVNFTLNKTYNKARRLLWESMSMMNNDLAERAKTSLRRLEDGMKAALTPGAFFEALGLRYFGPIDGHNMGQLVRALREMQELPHPKLLHVITTKGKGFLPAEENQSDWHAHNGGFDTVTGITAKKEGPSATPKYQEVFGEALVEMALKDPAITAITAAMPTGTSLDLFQKAMPDRFYDVGIAEGHAVTFAAGQALEGLKPVCAIYSTFLQRALDQVIHDVALQNLPVVFAIDRAGLVGEDGPTHHGAFDLSYLHAVPGLTIMAPSDGQELRDMLHTALYHIDGPVAIRYPRGSTGGEEMRKNFTALEPGKGRMLKEGTGPVILTLGTMAATALEAGRLLENEGISVEIADMRFLKPLDTALIDRLSASATHIVTLEENSIIGGFGSAVADHLSEASKKTRLLRIGLPDAFVTHGSMTDLYRETGLDAPAVAEKIRLFYTGRES.

Thiamine diphosphate-binding positions include H77 and G118–A120. D149 is a binding site for Mg(2+). Residues G150–S151, N178, F290, and E375 contribute to the thiamine diphosphate site. Position 178 (N178) interacts with Mg(2+).

This sequence belongs to the transketolase family. DXPS subfamily. As to quaternary structure, homodimer. Mg(2+) is required as a cofactor. Requires thiamine diphosphate as cofactor.

It carries out the reaction D-glyceraldehyde 3-phosphate + pyruvate + H(+) = 1-deoxy-D-xylulose 5-phosphate + CO2. The protein operates within metabolic intermediate biosynthesis; 1-deoxy-D-xylulose 5-phosphate biosynthesis; 1-deoxy-D-xylulose 5-phosphate from D-glyceraldehyde 3-phosphate and pyruvate: step 1/1. Functionally, catalyzes the acyloin condensation reaction between C atoms 2 and 3 of pyruvate and glyceraldehyde 3-phosphate to yield 1-deoxy-D-xylulose-5-phosphate (DXP). In Chlorobium phaeovibrioides (strain DSM 265 / 1930) (Prosthecochloris vibrioformis (strain DSM 265)), this protein is 1-deoxy-D-xylulose-5-phosphate synthase.